Reading from the N-terminus, the 277-residue chain is Large ribosomal subunit protein uL2 (277 aa).

Positions M226–K277 are disordered.

The protein belongs to the universal ribosomal protein uL2 family. In terms of assembly, part of the 50S ribosomal subunit. Forms a bridge to the 30S subunit in the 70S ribosome.

In terms of biological role, one of the primary rRNA binding proteins. Required for association of the 30S and 50S subunits to form the 70S ribosome, for tRNA binding and peptide bond formation. It has been suggested to have peptidyltransferase activity; this is somewhat controversial. Makes several contacts with the 16S rRNA in the 70S ribosome. This Symbiobacterium thermophilum (strain DSM 24528 / JCM 14929 / IAM 14863 / T) protein is Large ribosomal subunit protein uL2.